Consider the following 309-residue polypeptide: Malate dehydrogenase (309 aa).

Residues 7–12 (GAGHVG) and aspartate 32 each bind NAD(+). Substrate-binding residues include arginine 81 and arginine 87. NAD(+) is bound by residues asparagine 94 and 117–119 (VSN). Residues asparagine 119 and arginine 150 each coordinate substrate. The Proton acceptor role is filled by histidine 174.

This sequence belongs to the LDH/MDH superfamily. MDH type 3 family.

It carries out the reaction (S)-malate + NAD(+) = oxaloacetate + NADH + H(+). In terms of biological role, catalyzes the reversible oxidation of malate to oxaloacetate. The polypeptide is Malate dehydrogenase (Chlorobium phaeovibrioides (strain DSM 265 / 1930) (Prosthecochloris vibrioformis (strain DSM 265))).